Consider the following 273-residue polypeptide: Glucosamine-6-phosphate deaminase (273 aa).

The active-site Proton acceptor; for enolization step is the Asp-72. The active-site For ring-opening step is the Asp-141. Residue His-143 is the Proton acceptor; for ring-opening step of the active site. The active-site For ring-opening step is Glu-148.

It belongs to the glucosamine/galactosamine-6-phosphate isomerase family. Homohexamer.

The protein localises to the cytoplasm. The catalysed reaction is alpha-D-glucosamine 6-phosphate + H2O = beta-D-fructose 6-phosphate + NH4(+). Its pathway is nucleotide-sugar biosynthesis; UDP-N-acetyl-alpha-D-glucosamine biosynthesis; alpha-D-glucosamine 6-phosphate from D-fructose 6-phosphate: step 1/1. In terms of biological role, catalyzes the reversible conversion of alpha-D-glucosamine 6-phosphate (GlcN-6P) into beta-D-fructose 6-phosphate (Fru-6P) and ammonium ion, a regulatory reaction step in de novo uridine diphosphate-N-acetyl-alpha-D-glucosamine (UDP-GlcNAc) biosynthesis via hexosamine pathway. The sequence is that of Glucosamine-6-phosphate deaminase from Drosophila melanogaster (Fruit fly).